The chain runs to 464 residues: UDP-N-acetylmuramoylalanine--D-glutamate ligase (464 aa).

An ATP-binding site is contributed by G112–T118.

It belongs to the MurCDEF family.

It is found in the cytoplasm. The catalysed reaction is UDP-N-acetyl-alpha-D-muramoyl-L-alanine + D-glutamate + ATP = UDP-N-acetyl-alpha-D-muramoyl-L-alanyl-D-glutamate + ADP + phosphate + H(+). It functions in the pathway cell wall biogenesis; peptidoglycan biosynthesis. Functionally, cell wall formation. Catalyzes the addition of glutamate to the nucleotide precursor UDP-N-acetylmuramoyl-L-alanine (UMA). The protein is UDP-N-acetylmuramoylalanine--D-glutamate ligase of Chlorobium chlorochromatii (strain CaD3).